A 294-amino-acid chain; its full sequence is UDP-3-O-acyl-N-acetylglucosamine deacetylase (294 aa).

3 residues coordinate Zn(2+): H75, H232, and D236. H259 functions as the Proton donor in the catalytic mechanism.

The protein belongs to the LpxC family. It depends on Zn(2+) as a cofactor.

The enzyme catalyses a UDP-3-O-[(3R)-3-hydroxyacyl]-N-acetyl-alpha-D-glucosamine + H2O = a UDP-3-O-[(3R)-3-hydroxyacyl]-alpha-D-glucosamine + acetate. It functions in the pathway glycolipid biosynthesis; lipid IV(A) biosynthesis; lipid IV(A) from (3R)-3-hydroxytetradecanoyl-[acyl-carrier-protein] and UDP-N-acetyl-alpha-D-glucosamine: step 2/6. Its function is as follows. Catalyzes the hydrolysis of UDP-3-O-myristoyl-N-acetylglucosamine to form UDP-3-O-myristoylglucosamine and acetate, the committed step in lipid A biosynthesis. The chain is UDP-3-O-acyl-N-acetylglucosamine deacetylase from Campylobacter curvus (strain 525.92).